The chain runs to 466 residues: Asparagine--tRNA ligase (466 aa).

It belongs to the class-II aminoacyl-tRNA synthetase family. Homodimer.

The protein localises to the cytoplasm. It carries out the reaction tRNA(Asn) + L-asparagine + ATP = L-asparaginyl-tRNA(Asn) + AMP + diphosphate + H(+). This is Asparagine--tRNA ligase from Photorhabdus laumondii subsp. laumondii (strain DSM 15139 / CIP 105565 / TT01) (Photorhabdus luminescens subsp. laumondii).